The chain runs to 342 residues: Manganese-dependent ADP-ribose/CDP-alcohol diphosphatase (342 aa).

Residues D18, Q20, D67, N103, H239, H276, and H278 each contribute to the Zn(2+) site.

It belongs to the ADPRibase-Mn family. Monomer. Mg(2+) is required as a cofactor.

It carries out the reaction CDP-choline + H2O = phosphocholine + CMP + 2 H(+). The catalysed reaction is ADP-D-ribose + H2O = D-ribose 5-phosphate + AMP + 2 H(+). The enzyme catalyses CDP-glycerol + H2O = sn-glycerol 3-phosphate + CMP + 2 H(+). Functionally, hydrolyzes ADP-ribose, IDP-ribose, CDP-glycerol, CDP-choline and CDP-ethanolamine, but not other non-reducing ADP-sugars or CDP-glucose. This chain is Manganese-dependent ADP-ribose/CDP-alcohol diphosphatase (adprm), found in Xenopus tropicalis (Western clawed frog).